A 484-amino-acid chain; its full sequence is Tyramine receptor 1 (484 aa).

At Met-1–Thr-54 the chain is on the extracellular side. An N-linked (GlcNAc...) asparagine glycan is attached at Asn-13. A helical membrane pass occupies residues Ala-55 to Phe-77. Residues Thr-78–Asn-87 are Cytoplasmic-facing. A helical transmembrane segment spans residues Phe-88 to Val-109. Topologically, residues Ala-110–Met-126 are extracellular. A disulfide bond links Cys-124 and Cys-203. The helical transmembrane segment at Trp-127 to Leu-147 threads the bilayer. At Asp-148–Arg-167 the chain is on the cytoplasmic side. A helical membrane pass occupies residues Val-168–Trp-190. At Asn-191–Ser-215 the chain is on the extracellular side. Asn-198 carries an N-linked (GlcNAc...) asparagine glycan. A helical transmembrane segment spans residues Ser-216–Ala-237. At Thr-238–Thr-411 the chain is on the cytoplasmic side. The segment covering Ser-253–Thr-280 has biased composition (polar residues). Disordered stretches follow at residues Ser-253–Val-322 and Thr-358–Val-383. A compositionally biased stretch (basic residues) spans Glu-295 to Lys-306. Positions Ala-361–Ala-378 are enriched in polar residues. A helical transmembrane segment spans residues Leu-412–Val-433. Residues Pro-434 to Asn-448 are Extracellular-facing. The helical transmembrane segment at Phe-449–Leu-470 threads the bilayer. Residues Asp-471–Thr-484 lie on the Cytoplasmic side of the membrane.

It belongs to the G-protein coupled receptor 1 family. Present mainly in the central nervous system, especially in the supra- and subesophageal, thoracic and abdominal ganglia. Not found in the distal part of optic lobes.

It localises to the cell membrane. Functionally, G-protein coupled receptor for tyramine, a known neurotransmitter and neuromodulator and direct precursor of octopamine. The rank order of potency for agonists of this receptor is tyramine &gt; naphazoline &gt; tolazoline &gt; DL-octopamine &gt; dopamine &gt; epinephrine &gt; 5-hydroxytryptamine. For antagonists, the rank order is yohimbine &gt; chlorpromazine &gt; mianserin &gt; phentolamine &gt; metoclopramide. This Locusta migratoria (Migratory locust) protein is Tyramine receptor 1 (GCR1).